We begin with the raw amino-acid sequence, 60 residues long: Large ribosomal subunit protein bL32 (60 aa).

Positions 1–25 (MAVQQNKKSPSKRGMHRSHNALNVP) are disordered. Positions 9-19 (SPSKRGMHRSH) are enriched in basic residues.

The protein belongs to the bacterial ribosomal protein bL32 family.

This is Large ribosomal subunit protein bL32 from Polaromonas naphthalenivorans (strain CJ2).